The chain runs to 441 residues: Ankyrin repeat and MYND domain-containing protein 2 (441 aa).

ANK repeat units lie at residues Asn45–Cys74, His79–Val108, and Lys159–Leu188. Cys320, Cys323, Cys332, Cys335, Cys341, Cys345, His353, and Cys357 together coordinate Zn(2+). The segment at Cys320–Cys357 adopts an MYND-type zinc-finger fold. Positions Glu374–Leu384 are enriched in basic and acidic residues. Residues Glu374–Glu441 form a disordered region.

In terms of assembly, interacts with the retinal-specific guanylyl cyclase GC1.

It localises to the cell projection. The protein resides in the cilium. May be involved in the trafficking of signaling proteins to the cilia. In Homo sapiens (Human), this protein is Ankyrin repeat and MYND domain-containing protein 2 (ANKMY2).